The primary structure comprises 320 residues: mRNA decay activator protein ZFP36 (320 aa).

Positions 1–15 (MDLSAIYESLMSMSH) are necessary for nuclear export. The tract at residues 1–93 (MDLSAIYESL…PTSPTATPTT (93 aa)) is necessary and sufficient for the association with mRNA decay enzymes and mRNA decay activation. Necessary for localization of ARE-containing mRNAs to processing bodies (PBs) stretches follow at residues 1-167 (MDLS…DLAL) and 93-320 (TSSR…SVSE). Residues 17-50 (LSPDHGGTESSGGLWNINSSDSIPSGVTSRLTGR) are disordered. Over residues 27 to 50 (SGGLWNINSSDSIPSGVTSRLTGR) the composition is skewed to polar residues. Ser53 bears the Phosphoserine; by MAPKAPK2 mark. Ser59 carries the phosphoserine modification. The stretch at 64–68 (PPPPG) is one P-P-P-P-G repeat. Pro residues predominate over residues 66–85 (PPGFAPLAPRPGPELSPSPT). The interval 66–95 (PPGFAPLAPRPGPELSPSPTSPTATPTTSS) is disordered. Phosphoserine occurs at positions 81 and 83. Position 85 is a phosphothreonine (Thr85). At Ser86 the chain carries Phosphoserine. A compositionally biased stretch (low complexity) spans 86–95 (SPTATPTTSS). The segment at 88-161 (TATPTTSSRY…GSRCHFIHNP (74 aa)) is necessary for nuclear localization. A necessary for RNA-binding region spans residues 90–166 (TPTTSSRYKT…FIHNPTEDLA (77 aa)). 2 C3H1-type zinc fingers span residues 96 to 124 (RYKT…HGPG) and 134 to 162 (KYKT…HNPT). A necessary for interaction with PABPN1 region spans residues 96–187 (RYKTELCRTY…ISFSGLPSGR (92 aa)). A necessary for mRNA decay activation region spans residues 167–320 (LPGQPHVLRQ…PIFNRISVSE (154 aa)). The residue at position 179 (Ser179) is a Phosphoserine; by MAPKAPK2. A disordered region spans residues 180 to 310 (FSGLPSGRRT…PQPPAPPRRL (131 aa)). The residue at position 190 (Ser190) is a Phosphoserine. One copy of the P-P-P-P-G repeat lies at 191–195 (PPPPG). Residues 197–209 (SGPSLSSCSFSPS) are compositionally biased toward low complexity. Ser211 carries the post-translational modification Phosphoserine. Residues 212–216 (PPPPG) form a P-P-P-P-G repeat. A Phosphoserine; by MAPK1; in vitro modification is found at Ser221. Residue Thr251 is modified to Phosphothreonine. 2 positions are modified to phosphoserine: Ser270 and Ser290. Residues 280–290 (SSGSSLGGSDS) show a composition bias toward low complexity. Positions 300–309 (PPQPPAPPRR) are enriched in pro residues. Residues 306 to 320 (PPRRLPIFNRISVSE) form an interaction with CNOT1 region. Ser317 carries the phosphoserine modification.

As to quaternary structure, associates with cytoplasmic CCR4-NOT and PAN2-PAN3 deadenylase complexes to trigger ARE-containing mRNA deadenylation and decay processes. Part of a mRNA decay activation complex at least composed of poly(A)-specific exoribonucleases CNOT6, EXOSC2 and XRN1 and mRNA-decapping enzymes DCP1A and DCP2. Associates with the RNA exosome complex. Interacts (via phosphorylated form) with 14-3-3 proteins; these interactions promote exclusion of ZFP36 from cytoplasmic stress granules in response to arsenite treatment in a MAPKAPK2-dependent manner and does not prevent CCR4-NOT deadenylase complex recruitment or ZFP36-induced ARE-containing mRNA deadenylation and decay processes. Interacts with 14-3-3 proteins; these interactions occur in response to rapamycin in an Akt-dependent manner. Interacts with AGO2 and AGO4. Interacts (via C-terminus) with CNOT1; this interaction occurs in a RNA-independent manner and induces mRNA deadenylation. Interacts (via N-terminus) with CNOT6. Interacts with CNOT6L. Interacts (via C-terminus) with CNOT7; this interaction occurs in a RNA-independent manner, induces mRNA deadenylation and is inhibited in a phosphorylation MAPKAPK2-dependent manner. Interacts (via unphosphorylated form) with CNOT8; this interaction occurs in a RNA-independent manner and is inhibited in a phosphorylation MAPKAPK2-dependent manner. Interacts with DCP1A. Interacts (via N-terminus) with DCP2. Interacts with EDC3. Interacts (via N-terminus) with EXOSC2. Interacts with heat shock 70 kDa proteins. Interacts with KHSRP; this interaction increases upon cytokine-induced treatment. Interacts with MAP3K4; this interaction enhances the association with SH3KBP1/CIN85. Interacts with MAPKAPK2; this interaction occurs upon skeletal muscle satellite cell activation. Interacts with NCL. Interacts with NUP214; this interaction increases upon lipopolysaccharide (LPS) stimulation. Interacts with PABPC1; this interaction occurs in a RNA-dependent manner. Interacts (via hypophosphorylated form) with PABPN1 (via RRM domain and C-terminal arginine-rich region); this interaction occurs in the nucleus in a RNA-independent manner, decreases in presence of single-stranded poly(A) RNA-oligomer and in a p38 MAPK-dependent-manner and inhibits nuclear poly(A) tail synthesis. Interacts with PAN2. Interacts (via C3H1-type zinc finger domains) with PKM. Interacts (via C3H1-type zinc finger domains) with nuclear RNA poly(A) polymerase. Interacts with PPP2CA; this interaction occurs in LPS-stimulated cells and induces ZFP36 dephosphorylation, and hence may promote ARE-containing mRNAs decay. Interacts (via C-terminus) with PRR5L (via C-terminus); this interaction may accelerate ZFP36-mediated mRNA decay during stress. Interacts (via C-terminus) with SFN; this interaction occurs in a phosphorylation-dependent manner. Interacts (via extreme C-terminal region) with SH3KBP1/CIN85 (via SH3 domains); this interaction enhances MAP3K4-induced phosphorylation of ZFP36 at Ser-59 and Ser-86 and does not alter neither ZFP36 binding to ARE-containing transcripts nor TNF-alpha mRNA decay. Interacts with XRN1. Interacts (via C-terminus and Ser-179 phosphorylated form) with YWHAB; this interaction occurs in a p38/MAPKAPK2-dependent manner, increases cytoplasmic localization of ZFP36 and protects ZFP36 from Ser-179 dephosphorylation by serine/threonine phosphatase 2A, and hence may be crucial for stabilizing ARE-containing mRNAs. Interacts (via phosphorylated form) with YWHAE. Interacts (via C-terminus) with YWHAG; this interaction occurs in a phosphorylation-dependent manner. Interacts with YWHAH; this interaction occurs in a phosphorylation-dependent manner. Interacts with YWHAQ; this interaction occurs in a phosphorylation-dependent manner. Interacts with (via C-terminus) YWHAZ; this interaction occurs in a phosphorylation-dependent manner. Does not interact with SH3KBP1. Interacts (via P-P-P-P-G repeats) with GIGYF2; the interaction is direct. In terms of processing, phosphorylated. Phosphorylation at serine and/or threonine residues occurs in a p38 MAPK- and MAPKAPK2-dependent manner. Phosphorylated by MAPKAPK2 at Ser-53 and Ser-179; phosphorylation increases its stability and cytoplasmic localization, promotes binding to 14-3-3 adapter proteins and inhibits the recruitment of cytoplasmic CCR4-NOT and PAN2-PAN3 deadenylase complexes to the mRNA decay machinery, thereby inhibiting ZFP36-induced ARE-containing mRNA deadenylation and decay processes. Phosphorylation by MAPKAPK2 does not impair ARE-containing RNA-binding. Phosphorylated in a MAPKAPK2- and p38 MAPK-dependent manner upon skeletal muscle satellite cell activation; this phosphorylation inhibits ZFP36-mediated mRNA decay activity, and hence stabilizes MYOD1 mRNA. Phosphorylated by MAPK1 upon mitogen stimulation. Phosphorylated at Ser-59 and Ser-86; these phosphorylations increase in a SH3KBP1-dependent manner. Phosphorylated at serine and threonine residues in a pyruvate kinase PKM- and p38 MAPK-dependent manner. Phosphorylation at Ser-53 may participate in the PKM-mediated degradation of ZFP36 in a p38 MAPK-dependent manner. Dephosphorylated by serine/threonine phosphatase 2A at Ser-179. Post-translationally, ubiquitinated; pyruvate kinase (PKM)-dependent ubiquitination leads to proteasomal degradation through a p38 MAPK signaling pathway.

The protein localises to the nucleus. Its subcellular location is the cytoplasm. It localises to the cytoplasmic granule. The protein resides in the P-body. Its function is as follows. Zinc-finger RNA-binding protein that destabilizes numerous cytoplasmic AU-rich element (ARE)-containing mRNA transcripts by promoting their poly(A) tail removal or deadenylation, and hence provide a mechanism for attenuating protein synthesis. Acts as an 3'-untranslated region (UTR) ARE mRNA-binding adapter protein to communicate signaling events to the mRNA decay machinery. Recruits deadenylase CNOT7 (and probably the CCR4-NOT complex) via association with CNOT1, and hence promotes ARE-mediated mRNA deadenylation. Also functions by recruiting components of the cytoplasmic RNA decay machinery to the bound ARE-containing mRNAs. Self regulates by destabilizing its own mRNA. Binds to 3'-UTR ARE of numerous mRNAs. Also binds to ARE of its own mRNA. Plays a role in anti-inflammatory responses; suppresses tumor necrosis factor (TNF)-alpha production by stimulating ARE-mediated TNF-alpha mRNA decay and several other inflammatory ARE-containing mRNAs in interferon (IFN)- and/or lipopolysaccharide (LPS)-induced macrophages. Also plays a role in the regulation of dendritic cell maturation at the post-transcriptional level, and hence operates as part of a negative feedback loop to limit the inflammatory response. Promotes ARE-mediated mRNA decay of hypoxia-inducible factor HIF1A mRNA during the response of endothelial cells to hypoxia. Positively regulates early adipogenesis of preadipocytes by promoting ARE-mediated mRNA decay of immediate early genes (IEGs). Negatively regulates hematopoietic/erythroid cell differentiation by promoting ARE-mediated mRNA decay of the transcription factor STAT5B mRNA. Plays a role in maintaining skeletal muscle satellite cell quiescence by promoting ARE-mediated mRNA decay of the myogenic determination factor MYOD1 mRNA. Also associates with and regulates the expression of non-ARE-containing target mRNAs at the post-transcriptional level, such as MHC class I mRNAs. Participates in association with argonaute RISC catalytic components in the ARE-mediated mRNA decay mechanism; assists microRNA (miRNA) targeting ARE-containing mRNAs. May also play a role in the regulation of cytoplasmic mRNA decapping; enhances decapping of ARE-containing RNAs, in vitro. Involved in the delivery of target ARE-mRNAs to processing bodies (PBs). In addition to its cytosolic mRNA-decay function, affects nuclear pre-mRNA processing. Negatively regulates nuclear poly(A)-binding protein PABPN1-stimulated polyadenylation activity on ARE-containing pre-mRNA during LPS-stimulated macrophages. Also involved in the regulation of stress granule (SG) and P-body (PB) formation and fusion. Plays a role in the regulation of keratinocyte proliferation, differentiation and apoptosis. Plays a role as a tumor suppressor by inhibiting cell proliferation in breast cancer cells. The sequence is that of mRNA decay activator protein ZFP36 from Rattus norvegicus (Rat).